The following is a 385-amino-acid chain: Probable splicing factor YJU2B (385 aa).

The tract at residues 1 to 26 (MGERKGQNKYYPPDFNPEKHGSLNRY) is disordered. Serine 40 is modified (phosphoserine). The stretch at 182–215 (LNSMLRRHFREKKKAMQEEEEKDQALQAKANLAI) forms a coiled coil. The segment at 256-385 (FPSAQGPSTS…VADYSDSESE (130 aa)) is disordered. Polar residues predominate over residues 260-270 (QGPSTSSSKAS). At serine 306 the chain carries Phosphoserine. 2 stretches are compositionally biased toward polar residues: residues 307 to 316 (PQCTADNSLS) and 359 to 373 (GSSQEDLLHPNTPNA).

Belongs to the CWC16 family.

Its subcellular location is the nucleus. Functionally, may be involved in mRNA splicing. The sequence is that of Probable splicing factor YJU2B from Rattus norvegicus (Rat).